The sequence spans 168 residues: MPRSRINGNFIDKTFSIVANILLRIIPTTSGEKEAFTYYRDGMSAQSEGNYAEALQNYYEATRLEIDPYDRSYILYNIGLIHTSNGEHTKALEYYFRALERNPFLPQAFNNMAVICHYRGEQAIQQGDSEIAESWFDQAAEYWKQAIALTPGNYIEAHNWLKITRRFE.

3 TPR repeats span residues 35–68 (AFTYYRDGMSAQSEGNYAEALQNYYEATRLEIDP), 72–105 (SYILYNIGLIHTSNGEHTKALEYYFRALERNPFL), and 120–153 (GEQAIQQGDSEIAESWFDQAAEYWKQAIALTPGN).

This sequence belongs to the Ycf3 family.

The protein localises to the plastid. The protein resides in the chloroplast thylakoid membrane. Functionally, essential for the assembly of the photosystem I (PSI) complex. May act as a chaperone-like factor to guide the assembly of the PSI subunits. This is Photosystem I assembly protein Ycf3 from Nandina domestica (Heavenly bamboo).